The chain runs to 78 residues: Large ribosomal subunit protein bL28 (78 aa).

The interval 1-20 is disordered; sequence MSRVCQVTGKRPVTGNNRSH.

Belongs to the bacterial ribosomal protein bL28 family.

In Vibrio campbellii (strain ATCC BAA-1116), this protein is Large ribosomal subunit protein bL28.